A 683-amino-acid chain; its full sequence is Dipeptidyl-peptidase 5 (683 aa).

Positions methionine 1–alanine 19 are cleaved as a signal peptide. 6 N-linked (GlcNAc...) asparagine glycosylation sites follow: asparagine 53, asparagine 69, asparagine 103, asparagine 116, asparagine 126, and asparagine 400. Active-site charge relay system residues include serine 535, aspartate 617, and histidine 649.

The protein belongs to the peptidase S9C family.

Its subcellular location is the secreted. The protein localises to the cytoplasm. It localises to the nucleus. The polypeptide is Dipeptidyl-peptidase 5 (Schizosaccharomyces pombe (strain 972 / ATCC 24843) (Fission yeast)).